The primary structure comprises 234 residues: Ribosomal RNA small subunit methyltransferase G (234 aa).

S-adenosyl-L-methionine-binding positions include G74, F79, A125–E126, and R144.

The protein belongs to the methyltransferase superfamily. RNA methyltransferase RsmG family.

The protein resides in the cytoplasm. Specifically methylates the N7 position of a guanine in 16S rRNA. This Roseiflexus sp. (strain RS-1) protein is Ribosomal RNA small subunit methyltransferase G.